A 524-amino-acid chain; its full sequence is MKEESAAQLGCCHRPMALGGTGGSLSPSLDFQLFRGDQVFSACRPLPDMVDAHGPSCASWLCPLPLAPGRSALLACLQDLDLNLCTPQPAPLGTDLQGLQEDALSMKHEPPGLQASSTDDKKFTVKYPQNKDKLGKQPERAGEGAPCPAFSSHNSSSPPPLQNRKSPSPLAFCPCPPVNSISKELPFLLHAFYPGYPLLLPPPHLFTYGALPSDQCPHLLMLPQDPSYPTMAMPSLLMMVNELGHPSARWETLLPYPGAFQASGQALPSQARNPGAGAAPTDSPGLERGGMASPAKRVPLSSQTGTAALPYPLKKKNGKILYECNICGKSFGQLSNLKVHLRVHSGERPFQCALCQKSFTQLAHLQKHHLVHTGERPHKCSIPWVPGRNHWKSFQAWREREVCHKRFSSSSNLKTHLRLHSGARPFQCSVCRSRFTQHIHLKLHHRLHAPQPCGLVHTQLPLASLACLAQWHQGALDLMAVASEKHMGYDIDEVKVSSTSQGKARAVSLSSAGTPLVMGQDQNN.

Residues 130–142 (NKDKLGKQPERAG) show a composition bias toward basic and acidic residues. 2 disordered regions span residues 130–166 (NKDK…NRKS) and 265–303 (QALP…LSSQ). C2H2-type zinc fingers lie at residues 322 to 344 (YECN…LRVH) and 350 to 372 (FQCA…HLVH). Residues 398–420 (REREVCHKRFSSSSNLKTHLRLH) form a C2H2-type 3; degenerate zinc finger. The segment at 426–448 (FQCSVCRSRFTQHIHLKLHHRLH) adopts a C2H2-type 4 zinc-finger fold.

The protein belongs to the krueppel C2H2-type zinc-finger protein family. As to expression, expressed in terminally differentiated effector CD8(+) T-cells, but not in naive and central memory cells. Expressed in terminally differentiated natural killer (NK) cells and natural killer (NKT) T-cells (at protein level). Expressed strongly in effector-type CD8(+) T-cells and weakly in naive and memory CD8(+) T-cells. Expressed in terminally differentiated natural killer (NK) cells. Isoform 2 is strongly expressed in effector CD8(+) T and natural killer (NK) cells. Isoform 1 is expressed in effector CD8(+) T and natural killer (NK) cells. In terms of tissue distribution, (Microbial infection) Expressed in cytomegalovirus (CMV)-infected effector CD8(+) T-cells (at protein level).

The protein localises to the nucleus. In terms of biological role, transcription factor that mediates a transcriptional program in various innate and adaptive immune tissue-resident lymphocyte T-cell types such as tissue-resident memory T (Trm), natural killer (trNK) and natural killer T (NKT) cells and negatively regulates gene expression of proteins that promote the egress of tissue-resident T-cell populations from non-lymphoid organs. Plays a role in the development, retention and long-term establishment of adaptive and innate tissue-resident lymphocyte T cell types in non-lymphoid organs, such as the skin and gut, but also in other nonbarrier tissues like liver and kidney, and therefore may provide immediate immunological protection against reactivating infections or viral reinfection. Also plays a role in the differentiation of both thymic and peripheral NKT cells. Negatively regulates the accumulation of interferon-gamma (IFN-gamma) in NKT cells at steady state or after antigenic stimulation. Positively regulates granzyme B production in NKT cells after innate stimulation. Associates with the transcriptional repressor PRDM1/BLIMP1 to chromatin at gene promoter regions. Functionally, lacks transcriptional repressor activity. Binds to DNA within promoter regions of the transcriptional repressor PRDM1/BLIMP1 target sites. Unable to regulate interferon-gamma (IFN-gamma) production in cytomegalovirus (CMV)-infected effector CD8(+) T-cells. Its function is as follows. Transcriptional repressor that binds to DNA within promoter regions of the transcriptional repressor PRDM1/BLIMP1 target sites. Regulates interferon-gamma (IFN-gamma) production in cytomegalovirus (CMV)-infected effector CD8(+) T cells. The chain is Tissue-resident T-cell transcription regulator protein ZNF683 from Homo sapiens (Human).